The sequence spans 816 residues: H(+)/Cl(-) exchange transporter 5 (816 aa).

Residues 1-124 lie on the Cytoplasmic side of the membrane; the sequence is MAMWQGAMDN…WALIHSVSDA (124 aa). Helical transmembrane passes span 125–162 and 208–231; these read FSGWLLMLLIGLLSGSLAGLIDISAHWMTDLKEGICTG and VNYFMYVLWALLFAFLAVSLVKAF. A Selectivity filter part_1 motif is present at residues 237 to 241; that stretch reads GSGIP. A chloride-binding site is contributed by Ser238. An intramembrane region (helical) is located at residues 240 to 247; it reads IPEIKTIL. 2 helical membrane-spanning segments follow: residues 256 to 275 and 281 to 300; these read LGKWTLVIKTITLVLAVSSG and EGPLVHVACCCGNILCHCFN. The Selectivity filter part_2 signature appears at 279–283; that stretch reads GKEGP. 2 consecutive intramembrane regions (helical) follow at residues 312–324 and 328–336; these read VLSAAAAAGVSVA and PIGGVLFSL. Transmembrane regions (helical) follow at residues 348-366, 389-414, 422-442, 498-518, and 523-542; these read LWRSFFAALVAAFTLRSIN, LVPFIVLGIFGGLWGALFIRTNIAWC, LGKYPVVEVLIVTAITAILAF, MWQLALTLILKIVITIFTFGM, and GLFIPSMAVGAIAGRLLGVG. The short motif at 523-527 is the Selectivity filter part_3 element; it reads GLFIP. Chloride is bound at residue Phe525. The segment at residues 570-584 is an intramembrane region (helical); sequence GLYAMVGAAACLGGV. The segment at residues 585–587 is an intramembrane region (note=Loop between two helices); that stretch reads TRM. Positions 588-599 form an intramembrane region, helical; sequence TVSLVVIMFELT. The segment at residues 600–604 is an intramembrane region (note=Loop between two helices); sequence GGLEY. Residues 605 to 622 traverse the membrane as a helical segment; sequence IVPLMAAAMTSKWVADAL. The Cytoplasmic segment spans residues 623–816; sequence GREGIYDAHI…NQDPESILFN (194 aa). Tyr628 provides a ligand contact to chloride. 2 CBS domains span residues 656 to 720 and 752 to 811; these read MKPR…ARKK and ILDL…QDPE. ATP contacts are provided by residues Thr666, 687–689, and 794–797; these read YSG and TKKD.

The protein belongs to the chloride channel (TC 2.A.49) family. ClC-5/CLCN5 subfamily. As to quaternary structure, interacts with NEDD4 and NEDD4L. In terms of processing, ubiquitinated by NEDD4L in the presence of albumin; which promotes endocytosis and proteasomal degradation. Kidney specific.

The protein localises to the golgi apparatus membrane. It is found in the endosome membrane. Its subcellular location is the cell membrane. It carries out the reaction 2 chloride(in) + H(+)(out) = 2 chloride(out) + H(+)(in). Proton-coupled chloride transporter. Functions as antiport system and exchanges chloride ions against protons. Important for normal acidification of the endosome lumen. May play an important role in renal tubular function. The CLC channel family contains both chloride channels and proton-coupled anion transporters that exchange chloride or another anion for protons. The absence of conserved gating glutamate residues is typical for family members that function as channels. In Rattus norvegicus (Rat), this protein is H(+)/Cl(-) exchange transporter 5 (Clcn5).